We begin with the raw amino-acid sequence, 239 residues long: Thymidylate kinase (239 aa).

An ATP-binding site is contributed by 10–17; that stretch reads GINGVGKS.

It belongs to the thymidylate kinase family.

It catalyses the reaction dTMP + ATP = dTDP + ADP. The protein operates within pyrimidine metabolism; dTTP biosynthesis. In terms of biological role, catalyzes the conversion of dTMP to dTDP. This is Thymidylate kinase (TMK) from African swine fever virus (isolate Warthog/Namibia/Wart80/1980) (ASFV).